The sequence spans 100 residues: Urease subunit gamma (100 aa).

The protein belongs to the urease gamma subunit family. In terms of assembly, heterotrimer of UreA (gamma), UreB (beta) and UreC (alpha) subunits. Three heterotrimers associate to form the active enzyme.

It localises to the cytoplasm. The enzyme catalyses urea + 2 H2O + H(+) = hydrogencarbonate + 2 NH4(+). It participates in nitrogen metabolism; urea degradation; CO(2) and NH(3) from urea (urease route): step 1/1. The polypeptide is Urease subunit gamma (Frankia alni (strain DSM 45986 / CECT 9034 / ACN14a)).